An 807-amino-acid chain; its full sequence is Oxysterol-binding protein 1 (807 aa).

Position 2 is an N-acetylalanine (A2). The disordered stretch occupies residues 61 to 86; that stretch reads GAGGVAAAGPAPAPPTGGSGGSGAGG. A compositionally biased stretch (gly residues) spans 77 to 86; the sequence is GGSGGSGAGG. One can recognise a PH domain in the interval 88–181; that stretch reads GSAREGWLFK…WVTALELAKA (94 aa). 117 to 122 lines the a 1,2-diacyl-sn-glycero-3-phospho-(1D-myo-inositol 4-phosphate) pocket; that stretch reads LSYYRS. A phosphoserine mark is found at S190, S193, S198, S238, and S240. Residues 291 to 326 adopt a coiled-coil conformation; it reads QKSLQYERDQRIRLEETLEQLAKQHNHLERAFRGAT. Residue Q314 participates in 20-hydroxycholesterol binding. Q314 serves as a coordination point for 25-hydroxycholesterol. Q314 is a binding site for 7beta-hydroxycholesterol. Position 314 (Q314) interacts with cholesterol. Q314 contacts ergosterol. The interval 329–353 is disordered; it reads PANTPGNVGSGKDQCCSGKGDMSDE. Residues S338, S345, and S351 each carry the phosphoserine modification. The FFAT motif lies at 358-364; sequence EFFDAPE. Phosphothreonine is present on T377. Residues S379, S382, S385, S386, and S389 each carry the phosphoserine modification. Residues 493–496 and 522–523 each bind a 1,2-diacyl-sn-glycero-3-phospho-(1D-myo-inositol 4-phosphate); these read KPFN and HH. Residues 710–759 are disordered; sequence TAPTDSRLRPDQRLMENGRWDEANAEKQRLEEKQRLSRKKREAEAMKATE. Residues 715-759 are compositionally biased toward basic and acidic residues; that stretch reads SRLRPDQRLMENGRWDEANAEKQRLEEKQRLSRKKREAEAMKATE. Residues 730 to 760 adopt a coiled-coil conformation; it reads DEANAEKQRLEEKQRLSRKKREAEAMKATED.

The protein belongs to the OSBP family. Homodimer or homotrimer. Interacts (via FFAT motif) with VAPA. Interacts (via C-terminus) with RELCH (via the third HEAT repeat). Found in a complex composed of RELCH, OSBP1 and RAB11A. In terms of tissue distribution, widely expressed.

The protein resides in the cytoplasm. It is found in the cytosol. The protein localises to the perinuclear region. It localises to the golgi apparatus membrane. Its subcellular location is the endoplasmic reticulum membrane. The protein resides in the golgi apparatus. It is found in the trans-Golgi network. Lipid transporter involved in lipid countertransport between the Golgi complex and membranes of the endoplasmic reticulum: specifically exchanges sterol with phosphatidylinositol 4-phosphate (PI4P), delivering sterol to the Golgi in exchange for PI4P, which is degraded by the SAC1/SACM1L phosphatase in the endoplasmic reticulum. Binds cholesterol and a range of oxysterols including 25-hydroxycholesterol. Cholesterol binding promotes the formation of a complex with PP2A and a tyrosine phosphatase which dephosphorylates ERK1/2, whereas 25-hydroxycholesterol causes its disassembly. Regulates cholesterol efflux by decreasing ABCA1 stability. The sequence is that of Oxysterol-binding protein 1 from Homo sapiens (Human).